The sequence spans 66 residues: MKEKIHPNYQEVEVKCVCGNTFKTGSTKKEIKVEICSNCHPFYTGAQRQIEVGGRAEKFRKKYGLK.

The Zn(2+) site is built by cysteine 16, cysteine 18, cysteine 36, and cysteine 39.

The protein belongs to the bacterial ribosomal protein bL31 family. Type A subfamily. In terms of assembly, part of the 50S ribosomal subunit. Zn(2+) serves as cofactor.

In terms of biological role, binds the 23S rRNA. This chain is Large ribosomal subunit protein bL31, found in Desulforamulus reducens (strain ATCC BAA-1160 / DSM 100696 / MI-1) (Desulfotomaculum reducens).